The primary structure comprises 707 residues: Anti-sigma-I factor RsgI9 (707 aa).

Residues 1 to 149 (MKITGVIVRI…NFSRISNIKN (149 aa)) are Cytoplasmic-facing. Positions 3-50 (ITGVIVRIHKDRAIIRTDDNRLLAVKRHNDMMVGQIVSFDANEVHKVE) constitute a RsgI N-terminal anti-sigma domain. The chain crosses the membrane as a helical span at residues 150–172 (FSRIASIAAAFVLIFLFGRNVML). At 173–707 (NNSSDSEYAY…DSEEKKEYIQ (535 aa)) the chain is on the extracellular side. A coiled-coil region spans residues 256–283 (NDKNKKTRDKREEKIDELKETIEQGIEA). Residues 345–392 (EDNTELAPTPTPVPPETPEPTPTPTASEATPSNSPVESKSPEAVPELG) form a disordered region. Over residues 353–367 (TPTPVPPETPEPTPT) the composition is skewed to pro residues. Residues 368 to 379 (PTASEATPSNSP) show a composition bias toward low complexity.

Its subcellular location is the cell membrane. This is Anti-sigma-I factor RsgI9 from Acetivibrio thermocellus (strain ATCC 27405 / DSM 1237 / JCM 9322 / NBRC 103400 / NCIMB 10682 / NRRL B-4536 / VPI 7372) (Clostridium thermocellum).